The sequence spans 366 residues: MDKEYVGFAALPNQLHRKSVKKGFDFTLMVAGESGLGKSTLINSLFLTNLYEDRQVPDASARTAQTLTIERRGVEIEEGGIKVKLTLVDTPGFGDSVDCSDCWLPVVRFIEEQFEQYLRDESGLNRKNIQDSRVHCCLYFISPFGRGLRPLDVAFLRAVHEKVNIIPVIGKADALMPRETQALKQKIRDQLKEEEINIYQFPECDSDEDEEFKKQNEEMKENIPFAVVGSCEVVRDGTRPVRGRRYSWGTVEVENPHHCDFLNLRRMLVQTHLQDLKEVTHDLLYEGYRARCLQSLARPGARDRASRSKLSRQSATEIPLPMLPLADTEKLIREKDEELRRMQEMLEKMQAQMQQSQAQGEQSDVL.

The 274-residue stretch at 22–295 (KGFDFTLMVA…EGYRARCLQS (274 aa)) folds into the Septin-type G domain. Positions 32–39 (GESGLGKS) are G1 motif. Residues 32-39 (GESGLGKS), threonine 66, glycine 92, and 171-179 (KADALMPRE) each bind GTP. The interval 89–92 (DTPG) is G3 motif. The interval 170-173 (GKAD) is G4 motif. A Phosphoserine modification is found at serine 206. Positions 229 and 244 each coordinate GTP. The residue at position 247 (serine 247) is a Phosphoserine. Threonine 250 bears the Phosphothreonine mark. Phosphoserine; by AURKB occurs at positions 306 and 314. Residues 347 to 366 (EKMQAQMQQSQAQGEQSDVL) are disordered. Residues 349-366 (MQAQMQQSQAQGEQSDVL) are compositionally biased toward low complexity.

It belongs to the TRAFAC class TrmE-Era-EngA-EngB-Septin-like GTPase superfamily. Septin GTPase family. As to quaternary structure, septins polymerize into heterooligomeric protein complexes that form filaments, and can associate with cellular membranes, actin filaments and microtubules. GTPase activity is required for filament formation. Interacts with AURKB.

It localises to the cytoplasm. It is found in the cytoskeleton. The protein resides in the microtubule organizing center. The protein localises to the centrosome. Its subcellular location is the midbody. In terms of biological role, filament-forming cytoskeletal GTPase. May play a role in cytokinesis (Potential). This is Septin-1 from Mus musculus (Mouse).